Here is a 263-residue protein sequence, read N- to C-terminus: Type III pantothenate kinase (263 aa).

9–16 (DIGNTNVK) provides a ligand contact to ATP. Residues Tyr-103 and 110-113 (GADR) each bind substrate. The active-site Proton acceptor is the Asp-112. Asp-134 serves as a coordination point for K(+). An ATP-binding site is contributed by Thr-137. Thr-190 contributes to the substrate binding site.

The protein belongs to the type III pantothenate kinase family. Homodimer. NH4(+) is required as a cofactor. K(+) serves as cofactor.

It is found in the cytoplasm. The catalysed reaction is (R)-pantothenate + ATP = (R)-4'-phosphopantothenate + ADP + H(+). It participates in cofactor biosynthesis; coenzyme A biosynthesis; CoA from (R)-pantothenate: step 1/5. Functionally, catalyzes the phosphorylation of pantothenate (Pan), the first step in CoA biosynthesis. This is Type III pantothenate kinase from Oleidesulfovibrio alaskensis (strain ATCC BAA-1058 / DSM 17464 / G20) (Desulfovibrio alaskensis).